The following is a 342-amino-acid chain: uncharacterized protein (342 aa).

Helical transmembrane passes span 35–55 (YFRV…WCFS), 134–154 (LLFL…IIYF), and 161–180 (LFIT…YCFS). Disordered regions lie at residues 198–220 (SSDN…QQYN) and 311–342 (IINN…NYTN).

The protein localises to the membrane. This is an uncharacterized protein from Dictyostelium discoideum (Social amoeba).